We begin with the raw amino-acid sequence, 155 residues long: Sec-independent protein translocase protein TatB (155 aa).

Residues 1-21 form a helical membrane-spanning segment; sequence MIDLGISKIALIGAVALIVIG. 2 disordered regions span residues 81-103 and 131-155; these read ASDF…LPGF and SGIR…SRKA. Residues 89–98 are compositionally biased toward polar residues; the sequence is SETTGSTSSD.

Belongs to the TatB family. In terms of assembly, the Tat system comprises two distinct complexes: a TatABC complex, containing multiple copies of TatA, TatB and TatC subunits, and a separate TatA complex, containing only TatA subunits. Substrates initially bind to the TatABC complex, which probably triggers association of the separate TatA complex to form the active translocon.

It localises to the cell inner membrane. In terms of biological role, part of the twin-arginine translocation (Tat) system that transports large folded proteins containing a characteristic twin-arginine motif in their signal peptide across membranes. Together with TatC, TatB is part of a receptor directly interacting with Tat signal peptides. TatB may form an oligomeric binding site that transiently accommodates folded Tat precursor proteins before their translocation. The sequence is that of Sec-independent protein translocase protein TatB from Polaromonas naphthalenivorans (strain CJ2).